Reading from the N-terminus, the 159-residue chain is MSTDLNYSATRDPFSALGLDVGNRRIGVAGSDGLGLLATGLGVIRRRSLPEDIAQVQAWIRRRQATVVVVGIPLLADGSVGSQARKVQRFVRALQAAVDLPVVTVNEYLSTVQAEWDLRQAGIPAKAQKALIDQQSAAVILQTWLDERRYSQSSKAPCR.

The protein belongs to the YqgF nuclease family.

It is found in the cytoplasm. Could be a nuclease involved in processing of the 5'-end of pre-16S rRNA. This chain is Putative pre-16S rRNA nuclease, found in Synechococcus sp. (strain JA-3-3Ab) (Cyanobacteria bacterium Yellowstone A-Prime).